Consider the following 329-residue polypeptide: Methionyl-tRNA formyltransferase (329 aa).

(6S)-5,6,7,8-tetrahydrofolate is bound at residue 112-115 (SILP).

It belongs to the Fmt family.

It catalyses the reaction L-methionyl-tRNA(fMet) + (6R)-10-formyltetrahydrofolate = N-formyl-L-methionyl-tRNA(fMet) + (6S)-5,6,7,8-tetrahydrofolate + H(+). Functionally, attaches a formyl group to the free amino group of methionyl-tRNA(fMet). The formyl group appears to play a dual role in the initiator identity of N-formylmethionyl-tRNA by promoting its recognition by IF2 and preventing the misappropriation of this tRNA by the elongation apparatus. This Shewanella sediminis (strain HAW-EB3) protein is Methionyl-tRNA formyltransferase.